The chain runs to 290 residues: Small ribosomal subunit biogenesis GTPase RsgA (290 aa).

One can recognise a CP-type G domain in the interval 62–219 (RTCLKRPAVA…VADTPGFSRL (158 aa)). Residues 111–114 (NKAD) and 161–169 (GPSGVGKSS) each bind GTP. 4 residues coordinate Zn(2+): cysteine 243, cysteine 248, histidine 250, and cysteine 256.

Belongs to the TRAFAC class YlqF/YawG GTPase family. RsgA subfamily. Monomer. Associates with 30S ribosomal subunit, binds 16S rRNA. Zn(2+) is required as a cofactor.

The protein resides in the cytoplasm. In terms of biological role, one of several proteins that assist in the late maturation steps of the functional core of the 30S ribosomal subunit. Helps release RbfA from mature subunits. May play a role in the assembly of ribosomal proteins into the subunit. Circularly permuted GTPase that catalyzes slow GTP hydrolysis, GTPase activity is stimulated by the 30S ribosomal subunit. This Moorella thermoacetica (strain ATCC 39073 / JCM 9320) protein is Small ribosomal subunit biogenesis GTPase RsgA.